The chain runs to 24 residues: Brevinin-1Pe (24 aa).

The cysteines at positions 18 and 24 are disulfide-linked.

Expressed by the skin glands.

The protein resides in the secreted. Its function is as follows. Antibacterial activity against Gram-positive bacterium S.aureus and Gram-negative bacterium E.coli. Has activity against C.albicans. The chain is Brevinin-1Pe from Lithobates pipiens (Northern leopard frog).